We begin with the raw amino-acid sequence, 448 residues long: MKSLSLLLAVALGLATAVSAGPAVIECWFVEDTSGKGLAKRPGALLLRQGQGEPPPRPDLDPELYLNVHDPTGFLQAAFRRYPRDAPAPHCEMSRFVPLPASANWASGLTPARNCPRALDGAWLMVSMSSPVLSLSSLLRPQPEPQQEPVLITMATVVLTVLTHTPAPRVRLGQDALLDLSFAYMPPTSEAASSLAAGPPPFGLEWRRQHLGKGHLLLAATPGLNGQMPAAQEGAVAFAAWDDDEPWGPWTGNGTFWLPRVQPFQEGTYLATIHLPYLQGQVTLELAVYKPPKVSLMPATLAWAAPGEAPPELLCLVSHFYPPGGLEVEWELRGGPGGRSQKAEGQRWLSALRHHSDGSVSLSGHLQPPPVTTEQHGARYACRIHHPSLPASGRSAEVTLEVAGLSGPSLEDSIGLFLSAFFLLGLFKALGWAAVYLSTCKDSKKKAE.

Residues 1-20 (MKSLSLLLAVALGLATAVSA) form the signal peptide. Residues 21-414 (GPAVIECWFV…LSGPSLEDSI (394 aa)) are Lumenal-facing. A disulfide bridge links cysteine 27 with cysteine 91. N-linked (GlcNAc...) asparagine glycosylation occurs at asparagine 253. The Ig-like C1-type domain maps to 292-399 (PKVSLMPATL…PASGRSAEVT (108 aa)). Cysteine 315 and cysteine 382 are disulfide-bonded. The helical transmembrane segment at 415-435 (GLFLSAFFLLGLFKALGWAAV) threads the bilayer. Topologically, residues 436–448 (YLSTCKDSKKKAE) are cytoplasmic.

As to quaternary structure, heterodimer with PDIA3; disulfide-linked. Obligatory mediator for the interaction between newly assembled MHC class I molecules, calreticulin, PDIA3 and TAP. Up to 4 MHC class I/tapasin complexes bind to 1 TAP. Interacts with HLA-G-B2M complex; this interaction is required for loading of high affinity peptides. On its own or as part of MHC class I peptide loading complex, interacts with ligand-free MR1 or MR1-B2M complex, providing for stable MR1 pools ready for metabolite antigen processing.

It is found in the endoplasmic reticulum membrane. Functionally, involved in the association of MHC class I with transporter associated with antigen processing (TAP) and in the assembly of MHC class I with peptide (peptide loading). The chain is Tapasin (TAPBP) from Chlorocebus aethiops (Green monkey).